Consider the following 700-residue polypeptide: Peroxisomal acyl-coenzyme A oxidase 3 (700 aa).

Ala2 carries the N-acetylalanine modification. Residue Thr281 is modified to Phosphothreonine. The short motif at 698–700 is the Microbody targeting signal element; sequence SKL.

The protein belongs to the acyl-CoA oxidase family. Requires FAD as cofactor.

It localises to the peroxisome. It catalyses the reaction a 2,3-saturated acyl-CoA + O2 = a (2E)-enoyl-CoA + H2O2. The enzyme catalyses (2S)-pristanoyl-CoA + O2 = (2E)-pristenoyl-CoA + H2O2. It carries out the reaction tetracosanoyl-CoA + O2 = (2E)-tetracosenoyl-CoA + H2O2. The catalysed reaction is hexadecanoyl-CoA + O2 = (2E)-hexadecenoyl-CoA + H2O2. It catalyses the reaction hexadecanedioyl-CoA + O2 = (2E)-hexadecenedioyl-CoA + H2O2. It participates in lipid metabolism; peroxisomal fatty acid beta-oxidation. Its function is as follows. Oxidizes the CoA-esters of 2-methyl-branched fatty acids. This chain is Peroxisomal acyl-coenzyme A oxidase 3 (ACOX3), found in Homo sapiens (Human).